Consider the following 390-residue polypeptide: Centrosomal protein of 44 kDa (390 aa).

The segment at 11–195 is binds with microtubules and centrioles; the sequence is RNLEQVLRLL…ISEDTLSPIT (185 aa). Positions 233–269 form a coiled coil; that stretch reads EITALQTMLAECQENLKKLTSIEKRLDCLEQKMKGKV. Positions 322-348 are disordered; that stretch reads RKSEVERPASIPLSSGYSTASSDSTPR. Phosphoserine is present on residues Ser331 and Ser345. The segment covering 335 to 345 has biased composition (low complexity); the sequence is SSGYSTASSDS. Thr346 carries the phosphothreonine modification. Residues 361 to 385 adopt a coiled-coil conformation; sequence SEETTIQKMERMKKMFEETAELLKC.

In terms of assembly, interacts with CROCC. Interacts with POC1B; the interaction is direct and recruits POC1B to centriolar microtubules. Binds to centriolar microtubules.

It is found in the cytoplasm. The protein localises to the cytoskeleton. The protein resides in the microtubule organizing center. It localises to the centrosome. Its subcellular location is the centriole. It is found in the spindle pole. The protein localises to the midbody. In terms of biological role, centriole-enriched microtubule-binding protein involved in centriole biogenesis. In collaboration with CEP295 and POC1B, is required for the centriole-to-centrosome conversion by ensuring the formation of bona fide centriole wall. Functions as a linker component that maintains centrosome cohesion. Associates with CROCC and regulates its stability and localization to the centrosome. In Homo sapiens (Human), this protein is Centrosomal protein of 44 kDa (CEP44).